Reading from the N-terminus, the 87-residue chain is NADH-ubiquinone oxidoreductase chain 4L (87 aa).

A run of 3 helical transmembrane segments spans residues 1–21 (MNLS…NRKN), 22–42 (IILM…LVLI), and 57–77 (LYII…LVAF).

This sequence belongs to the complex I subunit 4L family. In terms of assembly, core subunit of respiratory chain NADH dehydrogenase (Complex I) which is composed of 45 different subunits.

The protein localises to the mitochondrion inner membrane. The enzyme catalyses a ubiquinone + NADH + 5 H(+)(in) = a ubiquinol + NAD(+) + 4 H(+)(out). Core subunit of the mitochondrial membrane respiratory chain NADH dehydrogenase (Complex I) which catalyzes electron transfer from NADH through the respiratory chain, using ubiquinone as an electron acceptor. The sequence is that of NADH-ubiquinone oxidoreductase chain 4L (ND4L) from Moniliophthora perniciosa (strain FA553 / isolate CP02) (Witches'-broom disease fungus).